A 315-amino-acid polypeptide reads, in one-letter code: N-acetyl-gamma-glutamyl-phosphate reductase (315 aa).

Cys117 is an active-site residue.

This sequence belongs to the NAGSA dehydrogenase family. Type 2 subfamily.

Its subcellular location is the cytoplasm. It catalyses the reaction N-acetyl-L-glutamate 5-semialdehyde + phosphate + NADP(+) = N-acetyl-L-glutamyl 5-phosphate + NADPH + H(+). The protein operates within amino-acid biosynthesis; L-arginine biosynthesis; N(2)-acetyl-L-ornithine from L-glutamate: step 3/4. In terms of biological role, catalyzes the NADPH-dependent reduction of N-acetyl-5-glutamyl phosphate to yield N-acetyl-L-glutamate 5-semialdehyde. The chain is N-acetyl-gamma-glutamyl-phosphate reductase from Burkholderia ambifaria (strain ATCC BAA-244 / DSM 16087 / CCUG 44356 / LMG 19182 / AMMD) (Burkholderia cepacia (strain AMMD)).